The following is a 341-amino-acid chain: Short chain dehydrogenase virL (341 aa).

NADP(+) contacts are provided by leucine 49, lysine 74, aspartate 97, asparagine 123, tyrosine 210, and lysine 214. The active-site Proton donor is tyrosine 210. Lysine 214 serves as the catalytic Lowers pKa of active site Tyr.

Belongs to the short-chain dehydrogenases/reductases (SDR) family.

It functions in the pathway secondary metabolite biosynthesis. Functionally, short chain dehydrogenase; part of the gene cluster that mediates the biosynthesis of virensols and trichoxide, fungal natural products that contain or are derived from a salicylaldehyde core. The pathway begins with the synthesis of the reduced chain in virensol C by the highly reducing polyketide synthase virA via condensation of one acetate and 8 malonate units. VirA has interesting programming rules since the first 2 ketides are fully reduced, the 3 following ketides undergo beta-dehydration, and the last 3 ketides are only reduced to beta-hydroxys to yield the trihydroxy portion. The production of aldehyde virensol C by virA alone is surprising, since virA does not contain a reductase (R) domain that is typically associated with reductive product release in HRPKS. The cupin-domain enzyme virC is involved in enhancing virA product turnover. The short-chain dehydrogenase virB then oxidizes the C-7 alcohol of virensol C to a ketone, yielding virensol D. Virensol D is further transformed to salicylaldehyde 5-deoxyaurocitrin by the short-chain dehydrogenase virD. VirD catalyzes the dehydrogenation of C-3 to form the beta-ketone aldehyde, which is followed by the generation of the nucleophilic C-2 that is required for the intramolecular aldol condensation between C-2 and C-7, itself followed by dehydration and aromatization which leads to salicylaldehyde 5-deoxyaurocitrin. While the dehydrogenation of virensol D is definitely catalyzed by virD, the aldol condensation and dehydration may be uncatalyzed or assisted by virD. The short chain dehydrogenase virG then converts salicylaldehyde 5-deoxyaurocitrin into virensol B which is further hydroxylated by the cytochrome P450 monooxygenase virE to yield the hydroquinone virensol A. VirI then may oxidize virensol A to form the quinone, while virH performs the epoxidation. Finally, the two remaining short-chain dehydrogenases, virK and virL, are probably responsible for reducing the ketones to the corresponding alcohols to furnish the epoxycyclohexanol structure in trichoxide. The chain is Short chain dehydrogenase virL from Hypocrea virens (strain Gv29-8 / FGSC 10586) (Gliocladium virens).